The primary structure comprises 29 residues: Cycloviolacin-O15 (29 aa).

A cross-link (cyclopeptide (Gly-Asn)) is located at residues 1–29; that stretch reads GLVPCGETCFTGKCYTPGCSCSYPICKKN. Disulfide bonds link Cys5–Cys19, Cys9–Cys21, and Cys14–Cys26.

This is a cyclic peptide.

In terms of biological role, probably participates in a plant defense mechanism. Has hemolytic activity. The chain is Cycloviolacin-O15 from Viola odorata (Sweet violet).